The chain runs to 289 residues: Phosphatidylglycerol--prolipoprotein diacylglyceryl transferase (289 aa).

Helical transmembrane passes span 17–37 (LAVRWYGLMYLLGFACFILLG), 57–77 (MLFYGVLGVIVGGRLGHIFFY), 89–109 (IFAVWQGGMSFHGGFLGVIAA), 121–141 (WLVVTDFIAPLVPLGLGAGRI), 174–194 (QLYEFALEGLAFFTLMWIYSA), 200–220 (GAVSGMFLIGYGVFRSFAEFF), and 235–255 (ISMGQWLSLPMILAGVIMLVW). Residue Arg140 participates in a 1,2-diacyl-sn-glycero-3-phospho-(1'-sn-glycerol) binding.

Belongs to the Lgt family.

The protein localises to the cell inner membrane. The enzyme catalyses L-cysteinyl-[prolipoprotein] + a 1,2-diacyl-sn-glycero-3-phospho-(1'-sn-glycerol) = an S-1,2-diacyl-sn-glyceryl-L-cysteinyl-[prolipoprotein] + sn-glycerol 1-phosphate + H(+). It functions in the pathway protein modification; lipoprotein biosynthesis (diacylglyceryl transfer). Its function is as follows. Catalyzes the transfer of the diacylglyceryl group from phosphatidylglycerol to the sulfhydryl group of the N-terminal cysteine of a prolipoprotein, the first step in the formation of mature lipoproteins. The chain is Phosphatidylglycerol--prolipoprotein diacylglyceryl transferase from Nitrosospira multiformis (strain ATCC 25196 / NCIMB 11849 / C 71).